Reading from the N-terminus, the 173-residue chain is Dual-action ribosomal maturation protein DarP (173 aa).

This sequence belongs to the DarP family.

Its subcellular location is the cytoplasm. Its function is as follows. Member of a network of 50S ribosomal subunit biogenesis factors which assembles along the 30S-50S interface, preventing incorrect 23S rRNA structures from forming. Promotes peptidyl transferase center (PTC) maturation. This Pseudomonas putida (strain W619) protein is Dual-action ribosomal maturation protein DarP.